The chain runs to 283 residues: 4-hydroxy-tetrahydrodipicolinate reductase (283 aa).

Residues 15 to 20 (GALGRM) and 116 to 118 (GTT) contribute to the NAD(+) site. The active-site Proton donor/acceptor is the His-172. His-173 contacts (S)-2,3,4,5-tetrahydrodipicolinate. Residue Lys-176 is the Proton donor of the active site. Residue 182 to 183 (GT) participates in (S)-2,3,4,5-tetrahydrodipicolinate binding.

It belongs to the DapB family.

The protein resides in the cytoplasm. It carries out the reaction (S)-2,3,4,5-tetrahydrodipicolinate + NAD(+) + H2O = (2S,4S)-4-hydroxy-2,3,4,5-tetrahydrodipicolinate + NADH + H(+). The catalysed reaction is (S)-2,3,4,5-tetrahydrodipicolinate + NADP(+) + H2O = (2S,4S)-4-hydroxy-2,3,4,5-tetrahydrodipicolinate + NADPH + H(+). It participates in amino-acid biosynthesis; L-lysine biosynthesis via DAP pathway; (S)-tetrahydrodipicolinate from L-aspartate: step 4/4. Its function is as follows. Catalyzes the conversion of 4-hydroxy-tetrahydrodipicolinate (HTPA) to tetrahydrodipicolinate. The protein is 4-hydroxy-tetrahydrodipicolinate reductase of Prochlorococcus marinus (strain MIT 9313).